A 149-amino-acid polypeptide reads, in one-letter code: Cytochrome c-type biogenesis protein CcmE (149 aa).

The Cytoplasmic portion of the chain corresponds to Met1–Lys7. A helical; Signal-anchor for type II membrane protein transmembrane segment spans residues Met8–Ala28. The Periplasmic portion of the chain corresponds to Phe29–Gln149. Residues His123 and Tyr127 each coordinate heme.

It belongs to the CcmE/CycJ family.

It is found in the cell inner membrane. Heme chaperone required for the biogenesis of c-type cytochromes. Transiently binds heme delivered by CcmC and transfers the heme to apo-cytochromes in a process facilitated by CcmF and CcmH. This Nitrosomonas europaea (strain ATCC 19718 / CIP 103999 / KCTC 2705 / NBRC 14298) protein is Cytochrome c-type biogenesis protein CcmE.